Here is a 485-residue protein sequence, read N- to C-terminus: NADH-quinone oxidoreductase subunit N (485 aa).

Helical transmembrane passes span 8–28 (LIAL…MLSI), 35–55 (FLNA…LWFV), 71–91 (GFAM…CTFA), 105–125 (FYLL…ANHL), 127–147 (ALFL…GYAF), 159–179 (YTIL…LVYA), 203–223 (LLAG…LVPF), 235–255 (PAPV…GVVM), 271–291 (VVLG…ALSQ), 297–317 (LLGY…IALQ), 326–346 (VGVY…VVSL), 373–393 (AAVM…LGFI), 408–430 (WWLV…RVAV), and 455–475 (IVVL…QPLI).

It belongs to the complex I subunit 2 family. NDH-1 is composed of 13 different subunits. Subunits NuoA, H, J, K, L, M, N constitute the membrane sector of the complex.

Its subcellular location is the cell inner membrane. The catalysed reaction is a quinone + NADH + 5 H(+)(in) = a quinol + NAD(+) + 4 H(+)(out). In terms of biological role, NDH-1 shuttles electrons from NADH, via FMN and iron-sulfur (Fe-S) centers, to quinones in the respiratory chain. The immediate electron acceptor for the enzyme in this species is believed to be ubiquinone. Couples the redox reaction to proton translocation (for every two electrons transferred, four hydrogen ions are translocated across the cytoplasmic membrane), and thus conserves the redox energy in a proton gradient. This is NADH-quinone oxidoreductase subunit N from Salmonella schwarzengrund (strain CVM19633).